A 523-amino-acid chain; its full sequence is MTNIHHHKILILDFGSQYTQLIARRVREIGVYCELWAWDVTEEQIREFNPTGIILSGGPESTTEANSPRATEYVFNAGVPVLGICYGMQTMAMQLGGLTETSTHREFGYAEVSLQNPTALFADLNDDLTACDPKLDVWMSHGDKVTRLPDNFQITGMTSTCPIAAMSDESRRFYCVQFHPEVTHTKCGQKLLQNFVVDICGCETNWTAENIIEDAVARIKAQVGDDEVILGLSGGVDSSVTALLLHRAIGKNLHCVFVDNGLLRLNEGDQVMEMFGDKFGLNIIRVEAEDRFLEALKGIDEPEAKRKTIGKVFVDVFDDEAKKLTDVKWLAQGTIYPDVIESAASKTGKAHVIKSHHNVGGLPDYMKLGLVEPLRELFKDEVRKIGLALGLPAEMLNRHPFPGPGLGVRVLGEIKKEYCDLLRKADAIFIEELHKADWYYKVSQAFGVFLPVKSVGVMGDGRKYDWVISLRAVETIDFMTAHWANLPYDLLGKISNRIINEVNGISRVVYDISGKPPATIEWE.

The Glutamine amidotransferase type-1 domain occupies 8 to 205 (KILILDFGSQ…VVDICGCETN (198 aa)). Cys85 serves as the catalytic Nucleophile. Catalysis depends on residues His179 and Glu181. Residues 206 to 398 (WTAENIIEDA…LGLPAEMLNR (193 aa)) enclose the GMPS ATP-PPase domain. Position 233 to 239 (233 to 239 (SGGVDSS)) interacts with ATP.

In terms of assembly, homodimer.

It catalyses the reaction XMP + L-glutamine + ATP + H2O = GMP + L-glutamate + AMP + diphosphate + 2 H(+). It functions in the pathway purine metabolism; GMP biosynthesis; GMP from XMP (L-Gln route): step 1/1. Catalyzes the synthesis of GMP from XMP. This Histophilus somni (strain 2336) (Haemophilus somnus) protein is GMP synthase [glutamine-hydrolyzing].